The following is a 229-amino-acid chain: Coiled-coil domain-containing protein 134 (229 aa).

Residues 1-22 (MDPVQLLSFLLALLLPLGTALD) form the signal peptide. The stretch at 192–218 (NTDAFQKALREEEKRRRKEEKRKEIRK) forms a coiled coil. The disordered stretch occupies residues 201-229 (REEEKRRRKEEKRKEIRKGPRITRSRSEL). Residues 219-229 (GPRITRSRSEL) show a composition bias toward basic residues. Positions 226 to 229 (RSEL) match the Prevents secretion from ER motif.

Belongs to the CCDC134 family.

It localises to the endoplasmic reticulum lumen. Functionally, molecular adapter required to prevent protein hyperglycosylation of HSP90B1: during translation, associates with nascent HSP90B1 and the STT3A catalytic component of the OST-A complex and tethers them to a specialized translocon that forms a microenvironment for HSP90B1 folding. In the CCDC134-containing translocon, STT3A associates with the SRT pseudosubstrate motif of HSP90B1, preventing access to facultative glycosylation sites until folding is completed, preventing hyperglycosylation and subsequent degradation of HSP90B1. This chain is Coiled-coil domain-containing protein 134 (ccdc134), found in Xenopus tropicalis (Western clawed frog).